A 157-amino-acid chain; its full sequence is SsrA-binding protein (157 aa).

The segment at 130-157 (KAEHDKRDTIKEREGKREVERVMKSRHR) is disordered.

It belongs to the SmpB family.

It is found in the cytoplasm. In terms of biological role, required for rescue of stalled ribosomes mediated by trans-translation. Binds to transfer-messenger RNA (tmRNA), required for stable association of tmRNA with ribosomes. tmRNA and SmpB together mimic tRNA shape, replacing the anticodon stem-loop with SmpB. tmRNA is encoded by the ssrA gene; the 2 termini fold to resemble tRNA(Ala) and it encodes a 'tag peptide', a short internal open reading frame. During trans-translation Ala-aminoacylated tmRNA acts like a tRNA, entering the A-site of stalled ribosomes, displacing the stalled mRNA. The ribosome then switches to translate the ORF on the tmRNA; the nascent peptide is terminated with the 'tag peptide' encoded by the tmRNA and targeted for degradation. The ribosome is freed to recommence translation, which seems to be the essential function of trans-translation. The polypeptide is SsrA-binding protein (Acidovorax sp. (strain JS42)).